The following is a 612-amino-acid chain: Zinc metalloproteinase-disintegrin-like 8 (612 aa).

Residues 1 to 20 (MIQVLLVTICLAVFPYQGSS) form the signal peptide. The propeptide occupies 21-189 (IILGSGNVND…KKASQLNLTP (169 aa)). Residues 199–395 (KYIELVIVAD…NRPPCILNKP (197 aa)) form the Peptidase M12B domain. Glutamate 202 contributes to the Ca(2+) binding site. Residue asparagine 218 is glycosylated (N-linked (GlcNAc...) asparagine). A Ca(2+)-binding site is contributed by aspartate 286. Cystine bridges form between cysteine 310–cysteine 390, cysteine 350–cysteine 374, and cysteine 352–cysteine 357. Histidine 335 contributes to the Zn(2+) binding site. Glutamate 336 is a catalytic residue. The Zn(2+) site is built by histidine 339 and histidine 345. Positions 390, 393, 405, 408, 410, 412, 415, and 418 each coordinate Ca(2+). The region spanning 403–489 (PPVCGNYFVE…DCPTDDFQRN (87 aa)) is the Disintegrin domain. Cystine bridges form between cysteine 406–cysteine 435, cysteine 417–cysteine 430, cysteine 419–cysteine 425, cysteine 429–cysteine 452, cysteine 443–cysteine 449, cysteine 448–cysteine 474, cysteine 461–cysteine 481, cysteine 468–cysteine 500, cysteine 493–cysteine 505, cysteine 512–cysteine 562, cysteine 527–cysteine 573, cysteine 540–cysteine 550, cysteine 557–cysteine 599, and cysteine 593–cysteine 605. Positions 467–469 (ECD) match the D/ECD-tripeptide motif. Asparagine 502 is a glycosylation site (N-linked (GlcNAc...) asparagine).

This sequence belongs to the venom metalloproteinase (M12B) family. P-III subfamily. Zn(2+) serves as cofactor. In terms of tissue distribution, expressed by the venom gland.

The protein localises to the secreted. In terms of biological role, snake venom metalloproteinase that impairs hemostasis in the envenomed animal. This chain is Zinc metalloproteinase-disintegrin-like 8, found in Crotalus adamanteus (Eastern diamondback rattlesnake).